The following is a 129-amino-acid chain: MVKPSLKIRKKVKKNVVEGVAHIHASFNNTIVTISDRQGNALSWATSGGVGFKGSRKSTPFAAQVAAEHAGRAALEYGVKNLEVRVKGPGPGRDSAVRALNATGFKITSITDVTPIPHNGCRPPKKRRI.

This sequence belongs to the universal ribosomal protein uS11 family. In terms of assembly, part of the 30S ribosomal subunit. Interacts with proteins S7 and S18. Binds to IF-3.

Functionally, located on the platform of the 30S subunit, it bridges several disparate RNA helices of the 16S rRNA. Forms part of the Shine-Dalgarno cleft in the 70S ribosome. This is Small ribosomal subunit protein uS11 from Nitrosomonas europaea (strain ATCC 19718 / CIP 103999 / KCTC 2705 / NBRC 14298).